The primary structure comprises 398 residues: Dual-specificity RNA methyltransferase RlmN (398 aa).

Glu119 acts as the Proton acceptor in catalysis. Residues 125–364 (EADRATLCVS…TIVRKTRGDD (240 aa)) enclose the Radical SAM core domain. The cysteines at positions 132 and 369 are disulfide-linked. Positions 139, 143, and 146 each coordinate [4Fe-4S] cluster. Residues 193–194 (GE), Ser225, 247–249 (SLH), and Asn326 each bind S-adenosyl-L-methionine. The S-methylcysteine intermediate role is filled by Cys369.

This sequence belongs to the radical SAM superfamily. RlmN family. Requires [4Fe-4S] cluster as cofactor.

The protein resides in the cytoplasm. It carries out the reaction adenosine(2503) in 23S rRNA + 2 reduced [2Fe-2S]-[ferredoxin] + 2 S-adenosyl-L-methionine = 2-methyladenosine(2503) in 23S rRNA + 5'-deoxyadenosine + L-methionine + 2 oxidized [2Fe-2S]-[ferredoxin] + S-adenosyl-L-homocysteine. It catalyses the reaction adenosine(37) in tRNA + 2 reduced [2Fe-2S]-[ferredoxin] + 2 S-adenosyl-L-methionine = 2-methyladenosine(37) in tRNA + 5'-deoxyadenosine + L-methionine + 2 oxidized [2Fe-2S]-[ferredoxin] + S-adenosyl-L-homocysteine. In terms of biological role, specifically methylates position 2 of adenine 2503 in 23S rRNA and position 2 of adenine 37 in tRNAs. m2A2503 modification seems to play a crucial role in the proofreading step occurring at the peptidyl transferase center and thus would serve to optimize ribosomal fidelity. The protein is Dual-specificity RNA methyltransferase RlmN of Yersinia pestis.